Reading from the N-terminus, the 82-residue chain is Immediate early response 3-interacting protein 1 (82 aa).

The next 2 membrane-spanning stretches (helical) occupy residues 2–22 and 62–82; these read AFTLYSLLQAALLCVNAIAVL and VMRVPLIIVNSIAIVLLLLFG.

Belongs to the YOS1 family.

Its subcellular location is the endoplasmic reticulum membrane. Regulator of endoplasmic reticulum secretion that acts as a key determinant of brain size. Required for secretion of extracellular matrix proteins. Required for correct brain development by depositing sufficient extracellular matrix proteins for tissue integrity and the proliferation of neural progenitors. Acts as a regulator of the unfolded protein response (UPR). This chain is Immediate early response 3-interacting protein 1, found in Bos taurus (Bovine).